Reading from the N-terminus, the 85-residue chain is MATKKGGGSTKNGRDSVSKRLGVKVYGGQQAIAGNIIVRQRGTEYKPGKNVGIGRDHTLYALVDGIVTFEHVTKERQQISVYPKV.

The protein belongs to the bacterial ribosomal protein bL27 family.

The protein is Large ribosomal subunit protein bL27 of Leptospira biflexa serovar Patoc (strain Patoc 1 / Ames).